The primary structure comprises 363 residues: Tetraacyldisaccharide 4'-kinase (363 aa).

62–69 (RVGGTGKT) contacts ATP.

The protein belongs to the LpxK family.

The enzyme catalyses a lipid A disaccharide + ATP = a lipid IVA + ADP + H(+). The protein operates within glycolipid biosynthesis; lipid IV(A) biosynthesis; lipid IV(A) from (3R)-3-hydroxytetradecanoyl-[acyl-carrier-protein] and UDP-N-acetyl-alpha-D-glucosamine: step 6/6. Its function is as follows. Transfers the gamma-phosphate of ATP to the 4'-position of a tetraacyldisaccharide 1-phosphate intermediate (termed DS-1-P) to form tetraacyldisaccharide 1,4'-bis-phosphate (lipid IVA). The chain is Tetraacyldisaccharide 4'-kinase from Polynucleobacter asymbioticus (strain DSM 18221 / CIP 109841 / QLW-P1DMWA-1) (Polynucleobacter necessarius subsp. asymbioticus).